The following is a 603-amino-acid chain: Myotubularin (603 aa).

A compositionally biased stretch (polar residues) spans 1–13; sequence MASASTSKYNSHS. The interval 1–25 is disordered; sequence MASASTSKYNSHSLENESIKRTSRD. Phosphoserine is present on residues Ser-13 and Ser-18. The span at 14–25 shows a compositional bias: basic and acidic residues; sequence LENESIKRTSRD. Residues 29-97 form the GRAM domain; the sequence is RDLTEAVPRL…GVISRIEKMG (69 aa). Residues 163 to 538 form the Myotubularin phosphatase domain; the sequence is GWTVYNPVEE…RHLELWVNYY (376 aa). The a 1,2-diacyl-sn-glycero-3-phospho-(1D-myo-inositol-3,5-bisphosphate) site is built by Asn-288, Asn-313, and Ile-314. Positions 288, 313, and 314 each coordinate a 1,2-diacyl-sn-glycero-3-phospho-(1D-myo-inositol-3-phosphate). The active-site Phosphocysteine intermediate is the Cys-375. A 1,2-diacyl-sn-glycero-3-phospho-(1D-myo-inositol-3,5-bisphosphate) is bound by residues Ser-376, Asp-377, Gly-378, Trp-379, Asp-380, Arg-381, Lys-417, and Arg-421. A 1,2-diacyl-sn-glycero-3-phospho-(1D-myo-inositol-3-phosphate) is bound by residues Ser-376, Asp-377, Gly-378, Trp-379, Asp-380, and Arg-381. Arg-421 is an a 1,2-diacyl-sn-glycero-3-phospho-(1D-myo-inositol-3-phosphate) binding site. Thr-495 carries the post-translational modification Phosphothreonine. The disordered stretch occupies residues 579 to 603; that stretch reads SAKLSDPPTSPSSPSQMMPHVQTHF. Residue Ser-588 is modified to Phosphoserine.

Belongs to the protein-tyrosine phosphatase family. Non-receptor class myotubularin subfamily. As to quaternary structure, heterodimer with MTMR12. Interacts with KMT2A/MLL1 (via SET domain). Interacts with DES in skeletal muscle but not in cardiac muscle. Interacts with SPEG.

It is found in the cytoplasm. The protein resides in the cell membrane. The protein localises to the cell projection. It localises to the filopodium. Its subcellular location is the ruffle. It is found in the late endosome. The protein resides in the myofibril. The protein localises to the sarcomere. It carries out the reaction a 1,2-diacyl-sn-glycero-3-phospho-(1D-myo-inositol-3-phosphate) + H2O = a 1,2-diacyl-sn-glycero-3-phospho-(1D-myo-inositol) + phosphate. It catalyses the reaction a 1,2-diacyl-sn-glycero-3-phospho-(1D-myo-inositol-3,5-bisphosphate) + H2O = a 1,2-diacyl-sn-glycero-3-phospho-(1D-myo-inositol-5-phosphate) + phosphate. The enzyme catalyses 1,2-dioctanoyl-sn-glycero-3-phospho-(1-D-myo-inositol-3-phosphate) + H2O = 1,2-dioctanoyl-sn-glycero-3-phospho-(1D-myo-inositol) + phosphate. The catalysed reaction is 1,2-dioctanoyl-sn-glycero-3-phospho-(1D-myo-inositol-3,5-bisphosphate) + H2O = 1,2-dioctanoyl-sn-glycero-3-phospho-(1D-myo-inositol-5-phosphate) + phosphate. It carries out the reaction 1,2-dihexadecanoyl-sn-glycero-3-phospho-(1D-myo-inositol-3,5-phosphate) + H2O = 1,2-dihexadecanoyl-sn-glycero-3-phospho-(1D-myo-inositol-5-phosphate) + phosphate. Allosterically activated by phosphatidylinositol 5-phosphate (PI5P). Functionally, lipid phosphatase which dephosphorylates phosphatidylinositol 3-monophosphate (PI3P) and phosphatidylinositol 3,5-bisphosphate (PI(3,5)P2). Has also been shown to dephosphorylate phosphotyrosine- and phosphoserine-containing peptides. Negatively regulates EGFR degradation through regulation of EGFR trafficking from the late endosome to the lysosome. Plays a role in vacuolar formation and morphology. Regulates desmin intermediate filament assembly and architecture. Plays a role in mitochondrial morphology and positioning. Required for skeletal muscle maintenance but not for myogenesis. In skeletal muscles, stabilizes MTMR12 protein levels. The polypeptide is Myotubularin (Pongo abelii (Sumatran orangutan)).